The sequence spans 205 residues: Dephospho-CoA kinase (205 aa).

The region spanning 4 to 204 is the DPCK domain; sequence VVGLTGGIAS…QYYLTLATQQ (201 aa). Position 12–17 (12–17) interacts with ATP; sequence ASGKTT.

It belongs to the CoaE family.

It localises to the cytoplasm. It catalyses the reaction 3'-dephospho-CoA + ATP = ADP + CoA + H(+). Its pathway is cofactor biosynthesis; coenzyme A biosynthesis; CoA from (R)-pantothenate: step 5/5. Catalyzes the phosphorylation of the 3'-hydroxyl group of dephosphocoenzyme A to form coenzyme A. This Haemophilus ducreyi (strain 35000HP / ATCC 700724) protein is Dephospho-CoA kinase.